The sequence spans 305 residues: Probable G-protein coupled receptor 141 (305 aa).

Over 1–22 (MPGHNTSRNSSCDPIVTPHLIS) the chain is Extracellular. 2 N-linked (GlcNAc...) asparagine glycosylation sites follow: Asn5 and Asn9. Residues 23–43 (LYFIVLIGGLVGVISILFLLV) form a helical membrane-spanning segment. The Cytoplasmic segment spans residues 44-50 (KMNTRSV). The chain crosses the membrane as a helical span at residues 51 to 71 (TTMAVINLVVVHSVFLLTVPF). Residues 72-89 (RLTYLIKKTWMFGLPFCK) are Extracellular-facing. The chain crosses the membrane as a helical span at residues 90 to 110 (FVSAMLHIHMYLTFLFYVVIL). The Cytoplasmic segment spans residues 111-131 (VTRYLIFFKCKDKVEFYRKLH). A helical transmembrane segment spans residues 132–152 (AVAASAGMWTLVIVIVVPLVV). The Extracellular portion of the chain corresponds to 153–183 (SRYGIHEEYNEEHCFKFHKELAYTYVKIINY). The chain crosses the membrane as a helical span at residues 184–204 (MIVIFVIAVAVILLVFQVFII). Topologically, residues 205 to 227 (MLMVQKLRHSLLSHQEFWAQLKN) are cytoplasmic. A helical membrane pass occupies residues 228-248 (LFFIGVILVCFLPYQFFRIYY). Over 249 to 267 (LNVVTHSNACNSKVAFYNE) the chain is Extracellular. Residues 268–288 (IFLSVTAISCYDLLLFVFGGS) form a helical membrane-spanning segment. Residues 289 to 305 (HWFKQKIIGLWNCVLCR) lie on the Cytoplasmic side of the membrane.

This sequence belongs to the G-protein coupled receptor 1 family.

The protein localises to the cell membrane. Functionally, orphan receptor. This chain is Probable G-protein coupled receptor 141 (GPR141), found in Homo sapiens (Human).